Here is a 70-residue protein sequence, read N- to C-terminus: Omega-conotoxin-like Bu1 (70 aa).

An N-terminal signal peptide occupies residues 1 to 22 (MKLTCVAIVAVLLLTACQLITA). Positions 23-45 (EDSRGTQLHRALRKTTKLSVSTR) are excised as a propeptide. Cystine bridges form between Cys-46/Cys-61, Cys-53/Cys-65, and Cys-60/Cys-70.

This sequence belongs to the conotoxin O1 superfamily. As to expression, expressed by the venom duct.

The protein localises to the secreted. Omega-conotoxins act at presynaptic membranes, they bind and block voltage-gated calcium channels (Cav). In Conus bullatus (Bubble cone), this protein is Omega-conotoxin-like Bu1.